A 371-amino-acid polypeptide reads, in one-letter code: Protein OSB2, chloroplastic (371 aa).

The N-terminal 20 residues, 1–20, are a transit peptide targeting the chloroplast; it reads MSLISKSLARIECSPFFYPR. The disordered stretch occupies residues 45-64; sequence GKTGNGERKQRAKAPAKTPE. Positions 97 to 195 constitute an SSB domain; that stretch reads VANWVNLIGF…VLVQNLNFIQ (99 aa). PDF region regions lie at residues 237 to 289 and 312 to 360; these read WNHL…PKLE and WKDL…PKLP.

Expressed in the floral abscission zone.

It is found in the plastid. Its subcellular location is the chloroplast. Its function is as follows. Binds preferentially single-stranded DNA. Does not bind to RNA. The sequence is that of Protein OSB2, chloroplastic (OSB2) from Arabidopsis thaliana (Mouse-ear cress).